The sequence spans 681 residues: Sterile alpha motif domain-containing protein 11 (681 aa).

4 disordered regions span residues 41-77 (RNLKKERTPSFSASDGDSDGSGPTCGRRPGLKQEDGP), 212-234 (YHLGLPSHGEDPPWHDPPHHLPS), 251-307 (GPSG…APHV), and 407-498 (LLAL…GAEG). A Glycyl lysine isopeptide (Lys-Gly) (interchain with G-Cter in SUMO2) cross-link involves residue K72. The span at 219–234 (HGEDPPWHDPPHHLPS) shows a compositional bias: basic and acidic residues. The span at 412–423 (PQGPPGSGPPTP) shows a compositional bias: pro residues. T485 bears the Phosphothreonine mark. In terms of domain architecture, SAM spans 543 to 608 (WTVDDVCSFV…AQVARRLGRV (66 aa)). Residues 625-681 (LRAPERELGTGEQPLSPTTATSPYGGGHALAGQTSPKQENGTLALLPGAPDPSQPLC) form a disordered region. Composition is skewed to polar residues over residues 637 to 646 (QPLSPTTATS) and 656 to 665 (GQTSPKQENG). S640 bears the Phosphoserine mark.

Self-associates. Component of a Polycomb group (PcG) multiprotein PRC1-like complex. Interacts with SAMD7 and PHC2. In terms of tissue distribution, expressed in the outer and inner nuclear layers, ganglion cell layer and rod photoreceptors of the retina (at protein level). Widely expressed, showing the highest expression in kidney, prostate and retina.

Its subcellular location is the nucleus. In terms of biological role, component of a Polycomb group (PcG) multiprotein PRC1-like complex, essential for establishing rod photoreceptor cell identity and function by silencing nonrod gene expression in developing rod photoreceptor cells. This is Sterile alpha motif domain-containing protein 11 (SAMD11) from Homo sapiens (Human).